The sequence spans 151 residues: Large ribosomal subunit protein bL9 (151 aa).

The protein belongs to the bacterial ribosomal protein bL9 family.

Functionally, binds to the 23S rRNA. In Bordetella bronchiseptica (strain ATCC BAA-588 / NCTC 13252 / RB50) (Alcaligenes bronchisepticus), this protein is Large ribosomal subunit protein bL9.